The sequence spans 371 residues: Protein IQ-DOMAIN 7 (371 aa).

Residues 1–32 (MGGSGNWIRSLISNRKPVNDQQEKLSDKSSKK) are disordered. The span at 17-29 (PVNDQQEKLSDKS) shows a compositional bias: basic and acidic residues. 2 consecutive IQ domains span residues 93-121 (REWA…AVVR) and 122-144 (IQAI…CMQA). A calmodulin-binding region spans residues 125-141 (IFRGRQVRKQAAVTLRC). Disordered stretches follow at residues 285–308 (SGMS…PVAF) and 327–371 (LTQS…SQRS). Composition is skewed to polar residues over residues 297-308 (STSSTSQSPVAF) and 327-341 (LTQS…SGLS).

The protein belongs to the IQD family. Binds to multiple calmodulin (CaM) in the presence of Ca(2+) and CaM-like proteins.

It localises to the nucleus. Its subcellular location is the nucleus envelope. The protein localises to the cytoplasm. It is found in the cytoskeleton. May be involved in cooperative interactions with calmodulins or calmodulin-like proteins. Recruits calmodulin proteins to microtubules, thus being a potential scaffold in cellular signaling and trafficking. May associate with nucleic acids and regulate gene expression at the transcriptional or post-transcriptional level. The protein is Protein IQ-DOMAIN 7 of Arabidopsis thaliana (Mouse-ear cress).